Here is a 423-residue protein sequence, read N- to C-terminus: Serine--tRNA ligase (423 aa).

Residue 230-232 (TAE) coordinates L-serine. Position 261–263 (261–263 (RAE)) interacts with ATP. An L-serine-binding site is contributed by Glu284. 348–351 (EISS) contacts ATP. Ser384 serves as a coordination point for L-serine.

It belongs to the class-II aminoacyl-tRNA synthetase family. Type-1 seryl-tRNA synthetase subfamily. Homodimer. The tRNA molecule binds across the dimer.

The protein resides in the cytoplasm. It carries out the reaction tRNA(Ser) + L-serine + ATP = L-seryl-tRNA(Ser) + AMP + diphosphate + H(+). The enzyme catalyses tRNA(Sec) + L-serine + ATP = L-seryl-tRNA(Sec) + AMP + diphosphate + H(+). The protein operates within aminoacyl-tRNA biosynthesis; selenocysteinyl-tRNA(Sec) biosynthesis; L-seryl-tRNA(Sec) from L-serine and tRNA(Sec): step 1/1. Catalyzes the attachment of serine to tRNA(Ser). Is also able to aminoacylate tRNA(Sec) with serine, to form the misacylated tRNA L-seryl-tRNA(Sec), which will be further converted into selenocysteinyl-tRNA(Sec). The chain is Serine--tRNA ligase from Acetivibrio thermocellus (strain ATCC 27405 / DSM 1237 / JCM 9322 / NBRC 103400 / NCIMB 10682 / NRRL B-4536 / VPI 7372) (Clostridium thermocellum).